The primary structure comprises 465 residues: Probable glucan endo-1,3-beta-glucosidase eglC (465 aa).

The first 19 residues, 1–19 (MFTKTQILALALSIASAEA), serve as a signal peptide directing secretion. The Proton donor role is filled by Glu-128. Residue Asn-183 is glycosylated (N-linked (GlcNAc...) asparagine). Glu-239 functions as the Nucleophile in the catalytic mechanism. Residue Asn-318 is glycosylated (N-linked (GlcNAc...) asparagine). Low complexity-rich tracts occupy residues 320 to 333 (SSAS…SAQS) and 380 to 438 (SPSA…ATPA). Disordered stretches follow at residues 320–356 (SSAS…GHGG) and 380–440 (SPSA…PADF). Residue Gly-442 is the site of GPI-anchor amidated glycine attachment. Residues 443 to 465 (AGSRLSGSIFGAAMLVAALAVAL) constitute a propeptide, removed in mature form.

This sequence belongs to the glycosyl hydrolase 17 family. The GPI-anchor is attached to the protein in the endoplasmic reticulum and serves to target the protein to the cell surface. There, the glucosamine-inositol phospholipid moiety is cleaved off and the GPI-modified mannoprotein is covalently attached via its lipidless GPI glycan remnant to the 1,6-beta-glucan of the outer cell wall layer.

The protein resides in the cell membrane. The protein localises to the secreted. Its subcellular location is the cell wall. It catalyses the reaction Hydrolysis of (1-&gt;3)-beta-D-glucosidic linkages in (1-&gt;3)-beta-D-glucans.. Its function is as follows. Glucanases play a role in cell expansion during growth, in cell-cell fusion during mating, and in spore release during sporulation. This enzyme may be involved in beta-glucan degradation and also function biosynthetically as a transglycosylase. This Emericella nidulans (strain FGSC A4 / ATCC 38163 / CBS 112.46 / NRRL 194 / M139) (Aspergillus nidulans) protein is Probable glucan endo-1,3-beta-glucosidase eglC (eglC).